The following is a 379-amino-acid chain: Putative acetyl-CoA C-acetyltransferase VraB (379 aa).

C86 (acyl-thioester intermediate) is an active-site residue. The Proton acceptor role is filled by H338.

The protein belongs to the thiolase-like superfamily. Thiolase family.

The sequence is that of Putative acetyl-CoA C-acetyltransferase VraB (vraB) from Staphylococcus aureus (strain Mu3 / ATCC 700698).